The sequence spans 541 residues: uncharacterized protein (541 aa).

A signal peptide spans 1 to 17; sequence MSFSATILFSPPSGSEA. 2 disordered regions span residues 28 to 47 and 103 to 138; these read TSQG…TPIT and GKVC…SNSL. Residues 103–116 are compositionally biased toward basic and acidic residues; the sequence is GKVCTADEDRESRA. T118 is subject to Phosphothreonine. Residues K128 and K223 each participate in a glycyl lysine isopeptide (Lys-Gly) (interchain with G-Cter in SUMO2) cross-link. Position 226 is a phosphoserine (S226). Positions 232 to 243 are enriched in polar residues; that stretch reads AIQRASSETGPE. Residues 232-254 are disordered; the sequence is AIQRASSETGPESGTKLPATRPE. Residues S286 and S429 each carry the phosphoserine modification. Residues 494–526 are disordered; that stretch reads YNPNFQEDEGGGNEKGPVSPSYDQPHKTSCPDL.

The protein localises to the secreted. This is an uncharacterized protein from Mus musculus (Mouse).